The following is a 909-amino-acid chain: Protein NLP1 (909 aa).

Disordered stretches follow at residues 51–71 (KSLK…DNSP), 536–556 (KEDP…PVPN), 568–605 (ASTP…RAKT), and 690–745 (NSPN…ENTG). The segment covering 55 to 70 (QTEQSPSASTAMNDNS) has biased composition (polar residues). Residues 595–676 (RRPGEKKRAK…MDSVQGAQGS (82 aa)) form the RWP-RK domain. Residues 690-716 (NSPNMSSNGPSLKSNEQPSHLNAQTDN) show a composition bias toward polar residues. Positions 725 to 745 (RSPSSSCSKSSGSSNNNENTG) are enriched in low complexity. Positions 811-894 (AIKVKATFGE…HTIKISLNEA (84 aa)) constitute a PB1 domain.

The protein resides in the nucleus. Probable transcription factor. The chain is Protein NLP1 (NLP1) from Arabidopsis thaliana (Mouse-ear cress).